A 252-amino-acid polypeptide reads, in one-letter code: tRNA-cytidine(32) 2-sulfurtransferase (252 aa).

The PP-loop motif motif lies at 37 to 42; that stretch reads SGGKDS. Positions 112, 115, and 202 each coordinate [4Fe-4S] cluster.

It belongs to the TtcA family. As to quaternary structure, homodimer. Requires Mg(2+) as cofactor. It depends on [4Fe-4S] cluster as a cofactor.

It is found in the cytoplasm. The enzyme catalyses cytidine(32) in tRNA + S-sulfanyl-L-cysteinyl-[cysteine desulfurase] + AH2 + ATP = 2-thiocytidine(32) in tRNA + L-cysteinyl-[cysteine desulfurase] + A + AMP + diphosphate + H(+). It functions in the pathway tRNA modification. Functionally, catalyzes the ATP-dependent 2-thiolation of cytidine in position 32 of tRNA, to form 2-thiocytidine (s(2)C32). The sulfur atoms are provided by the cysteine/cysteine desulfurase (IscS) system. In Geotalea uraniireducens (strain Rf4) (Geobacter uraniireducens), this protein is tRNA-cytidine(32) 2-sulfurtransferase.